A 201-amino-acid polypeptide reads, in one-letter code: tRNA (guanine-N(7)-)-methyltransferase (201 aa).

The S-adenosyl-L-methionine site is built by Glu-33, Glu-58, Asp-85, and Asp-106. Residue Asp-106 is part of the active site. Substrate is bound by residues Lys-110, Asp-142, and 180–183; that span reads TTYE.

The protein belongs to the class I-like SAM-binding methyltransferase superfamily. TrmB family.

It catalyses the reaction guanosine(46) in tRNA + S-adenosyl-L-methionine = N(7)-methylguanosine(46) in tRNA + S-adenosyl-L-homocysteine. Its pathway is tRNA modification; N(7)-methylguanine-tRNA biosynthesis. Catalyzes the formation of N(7)-methylguanine at position 46 (m7G46) in tRNA. The chain is tRNA (guanine-N(7)-)-methyltransferase from Mesomycoplasma hyopneumoniae (strain 7448) (Mycoplasma hyopneumoniae).